Reading from the N-terminus, the 509-residue chain is ATP synthase subunit alpha (509 aa).

169–176 (GDRQTGKT) is an ATP binding site.

It belongs to the ATPase alpha/beta chains family. As to quaternary structure, F-type ATPases have 2 components, CF(1) - the catalytic core - and CF(0) - the membrane proton channel. CF(1) has five subunits: alpha(3), beta(3), gamma(1), delta(1), epsilon(1). CF(0) has three main subunits: a(1), b(2) and c(9-12). The alpha and beta chains form an alternating ring which encloses part of the gamma chain. CF(1) is attached to CF(0) by a central stalk formed by the gamma and epsilon chains, while a peripheral stalk is formed by the delta and b chains.

It is found in the cell inner membrane. The catalysed reaction is ATP + H2O + 4 H(+)(in) = ADP + phosphate + 5 H(+)(out). Its function is as follows. Produces ATP from ADP in the presence of a proton gradient across the membrane. The alpha chain is a regulatory subunit. This is ATP synthase subunit alpha from Brucella melitensis biotype 1 (strain ATCC 23456 / CCUG 17765 / NCTC 10094 / 16M).